The chain runs to 256 residues: Enolase-phosphatase E1 (256 aa).

Mg(2+) is bound by residues Asp13 and Glu15. Substrate contacts are provided by residues 127 to 128 (SS) and Lys175. Asp202 is a Mg(2+) binding site.

Belongs to the HAD-like hydrolase superfamily. MasA/MtnC family. As to quaternary structure, monomer. The cofactor is Mg(2+).

It is found in the cytoplasm. Its subcellular location is the nucleus. The catalysed reaction is 5-methylsulfanyl-2,3-dioxopentyl phosphate + H2O = 1,2-dihydroxy-5-(methylsulfanyl)pent-1-en-3-one + phosphate. It functions in the pathway amino-acid biosynthesis; L-methionine biosynthesis via salvage pathway; L-methionine from S-methyl-5-thio-alpha-D-ribose 1-phosphate: step 3/6. The protein operates within amino-acid biosynthesis; L-methionine biosynthesis via salvage pathway; L-methionine from S-methyl-5-thio-alpha-D-ribose 1-phosphate: step 4/6. Its function is as follows. Bifunctional enzyme that catalyzes the enolization of 2,3-diketo-5-methylthiopentyl-1-phosphate (DK-MTP-1-P) into the intermediate 2-hydroxy-3-keto-5-methylthiopentenyl-1-phosphate (HK-MTPenyl-1-P), which is then dephosphorylated to form the acireductone 1,2-dihydroxy-3-keto-5-methylthiopentene (DHK-MTPene). The polypeptide is Enolase-phosphatase E1 (utr4) (Botryotinia fuckeliana (strain B05.10) (Noble rot fungus)).